The primary structure comprises 390 residues: Homeobox protein Meis1 (390 aa).

Positions 108 to 192 (GGDVCSSESF…IDLVIDDREG (85 aa)) constitute an MEIS N-terminal domain. Residues 190 to 202 (REGGSKSDSEDIT) are compositionally biased toward basic and acidic residues. The tract at residues 190-279 (REGGSKSDSE…KKRHKKRGIF (90 aa)) is disordered. A compositionally biased stretch (polar residues) spans 203–213 (RSANLTDQPSW). The homeobox; TALE-type DNA-binding region spans 272-334 (RHKKRGIFPK…NARRRIVQPM (63 aa)). The tract at residues 299–329 (YPSEEQKKQLAQDTGLTILQVNNWFINARRR) is interaction with DNA. Residues 335–390 (IDQSNRAVSQGTPYNPDGQPMGGFVMDGQQHMGIRAPGPMSGMGMNMGMEGQWHYM) form a required for transcriptional activation region.

This sequence belongs to the TALE/MEIS homeobox family. In terms of assembly, interacts with the N-terminal region of PBX1 to form a heterodimer which binds DNA including a cAMP-responsive sequence in CYP17. Also forms heterodimers with PBX2. Forms heterotrimers with PBX1 or PBX2 and a number of HOX proteins including HOXA9, HOXD4 and HOXD9 where it acts as a non-DNA-binding partner. Also forms heterotrimers with PBX1 and HOX proteins including HOXD9 and HOXD10 where PBX1 is the non-DNA-binding partner. Heterodimer with DLX3. Heterodimer with HOXB13. Expressed at low level in normal immunohepatopoietic tissues, including the fetal liver. Expressed in a subset of myeloid leukemia cell lines, with the highest expression seen in those with a megakaryocytic-erythroid phenotype. Also expressed at high levels in the cerebellum.

Its subcellular location is the nucleus. In terms of biological role, acts as a transcriptional regulator of PAX6. Acts as a transcriptional activator of PF4 in complex with PBX1 or PBX2. Required for hematopoiesis, megakaryocyte lineage development and vascular patterning. May function as a cofactor for HOXA7 and HOXA9 in the induction of myeloid leukemias. This chain is Homeobox protein Meis1 (MEIS1), found in Homo sapiens (Human).